A 175-amino-acid chain; its full sequence is Threonylcarbamoyl-AMP synthase (175 aa).

Residues 1–175 (MLHNDDVIAY…IINGKLIRYV (175 aa)) enclose the YrdC-like domain.

It belongs to the SUA5 family. TsaC subfamily.

Its subcellular location is the cytoplasm. The enzyme catalyses L-threonine + hydrogencarbonate + ATP = L-threonylcarbamoyladenylate + diphosphate + H2O. Its function is as follows. Required for the formation of a threonylcarbamoyl group on adenosine at position 37 (t(6)A37) in tRNAs that read codons beginning with adenine. Catalyzes the conversion of L-threonine, HCO(3)(-)/CO(2) and ATP to give threonylcarbamoyl-AMP (TC-AMP) as the acyladenylate intermediate, with the release of diphosphate. The sequence is that of Threonylcarbamoyl-AMP synthase from Buchnera aphidicola subsp. Acyrthosiphon pisum (strain APS) (Acyrthosiphon pisum symbiotic bacterium).